A 207-amino-acid chain; its full sequence is MTRSVNTPWTLGLTGGIGSGKSAAAQHFIDLGVHVIDADHAARWVVEPGRPALEQIARHFGQGVLQADGQLDRAALRKLIFEVPEQRRWLEALLHPLIAEEIVSHLARAESPYAILVSPLLIESGQSRMTQRILVIDVPQQLQIERTLQRDQISEQQVQAILQAQASREERLRHADDVLVNDRDHAWLRSEVERLHHFYLTLRGGQS.

The DPCK domain occupies 10-207; the sequence is TLGLTGGIGS…FYLTLRGGQS (198 aa). 18-23 contacts ATP; the sequence is GSGKSA.

The protein belongs to the CoaE family.

Its subcellular location is the cytoplasm. It catalyses the reaction 3'-dephospho-CoA + ATP = ADP + CoA + H(+). The protein operates within cofactor biosynthesis; coenzyme A biosynthesis; CoA from (R)-pantothenate: step 5/5. Catalyzes the phosphorylation of the 3'-hydroxyl group of dephosphocoenzyme A to form coenzyme A. The polypeptide is Dephospho-CoA kinase (Pseudomonas fluorescens (strain ATCC BAA-477 / NRRL B-23932 / Pf-5)).